The chain runs to 93 residues: Small ribosomal subunit protein uS17 (93 aa).

Belongs to the universal ribosomal protein uS17 family. Part of the 30S ribosomal subunit.

In terms of biological role, one of the primary rRNA binding proteins, it binds specifically to the 5'-end of 16S ribosomal RNA. The polypeptide is Small ribosomal subunit protein uS17 (Bordetella avium (strain 197N)).